Here is a 518-residue protein sequence, read N- to C-terminus: Protein nucleotidyltransferase YdiU (518 aa).

Residues Met-1–Leu-10 show a composition bias toward basic and acidic residues. The disordered stretch occupies residues Met-1–Arg-25. Residues Gly-100, Gly-102, Arg-103, Lys-123, Asp-135, Gly-136, Arg-193, and Arg-200 each contribute to the ATP site. Asp-270 (proton acceptor) is an active-site residue. 2 residues coordinate Mg(2+): Asn-271 and Asp-280. ATP is bound at residue Asp-280.

This sequence belongs to the SELO family. The cofactor is Mg(2+). Requires Mn(2+) as cofactor.

It carries out the reaction L-seryl-[protein] + ATP = 3-O-(5'-adenylyl)-L-seryl-[protein] + diphosphate. The catalysed reaction is L-threonyl-[protein] + ATP = 3-O-(5'-adenylyl)-L-threonyl-[protein] + diphosphate. The enzyme catalyses L-tyrosyl-[protein] + ATP = O-(5'-adenylyl)-L-tyrosyl-[protein] + diphosphate. It catalyses the reaction L-histidyl-[protein] + UTP = N(tele)-(5'-uridylyl)-L-histidyl-[protein] + diphosphate. It carries out the reaction L-seryl-[protein] + UTP = O-(5'-uridylyl)-L-seryl-[protein] + diphosphate. The catalysed reaction is L-tyrosyl-[protein] + UTP = O-(5'-uridylyl)-L-tyrosyl-[protein] + diphosphate. In terms of biological role, nucleotidyltransferase involved in the post-translational modification of proteins. It can catalyze the addition of adenosine monophosphate (AMP) or uridine monophosphate (UMP) to a protein, resulting in modifications known as AMPylation and UMPylation. This chain is Protein nucleotidyltransferase YdiU, found in Xanthomonas euvesicatoria pv. vesicatoria (strain 85-10) (Xanthomonas campestris pv. vesicatoria).